We begin with the raw amino-acid sequence, 292 residues long: Elongation factor Ts (292 aa).

Positions 79–82 are involved in Mg(2+) ion dislocation from EF-Tu; it reads TDFV.

It belongs to the EF-Ts family.

It localises to the cytoplasm. Associates with the EF-Tu.GDP complex and induces the exchange of GDP to GTP. It remains bound to the aminoacyl-tRNA.EF-Tu.GTP complex up to the GTP hydrolysis stage on the ribosome. The sequence is that of Elongation factor Ts from Xanthomonas oryzae pv. oryzae (strain MAFF 311018).